We begin with the raw amino-acid sequence, 343 residues long: uncharacterized protein (343 aa).

The tract at residues 66 to 89 is disordered; the sequence is TQNPEPTSASTPPSASASSLPNGA. A compositionally biased stretch (low complexity) spans 71-84; it reads PTSASTPPSASASS. Residues 96 to 116 traverse the membrane as a helical segment; that stretch reads GVIAGPIVGVLGGLIVLVIIF. Disordered regions lie at residues 161–191 and 252–343; these read GGYQMHSTPWASSPRNSTIPQRSQSFYNDTR and GRPL…SEHF. Residues 165-188 show a composition bias toward polar residues; that stretch reads MHSTPWASSPRNSTIPQRSQSFYN. Over residues 280–289 the composition is skewed to basic and acidic residues; the sequence is SNDDSDETKL. A compositionally biased stretch (low complexity) spans 290 to 299; that stretch reads KQSSTESSSE. Composition is skewed to basic and acidic residues over residues 301-311 and 322-333; these read LDEKDKFDKNS and SSYEHEISEEHK. Over residues 334-343 the composition is skewed to basic residues; sequence KHSKKRSEHF.

The protein resides in the golgi apparatus membrane. This is an uncharacterized protein from Schizosaccharomyces pombe (strain 972 / ATCC 24843) (Fission yeast).